The chain runs to 142 residues: Large ribosomal subunit protein uL13 (142 aa).

The protein belongs to the universal ribosomal protein uL13 family. Part of the 50S ribosomal subunit.

Its function is as follows. This protein is one of the early assembly proteins of the 50S ribosomal subunit, although it is not seen to bind rRNA by itself. It is important during the early stages of 50S assembly. The polypeptide is Large ribosomal subunit protein uL13 (Alkalilimnicola ehrlichii (strain ATCC BAA-1101 / DSM 17681 / MLHE-1)).